Here is a 268-residue protein sequence, read N- to C-terminus: Hydroxyethylthiazole kinase (268 aa).

A substrate-binding site is contributed by methionine 45. Arginine 121 and threonine 167 together coordinate ATP. Glycine 194 contributes to the substrate binding site.

It belongs to the Thz kinase family. Mg(2+) is required as a cofactor.

It catalyses the reaction 5-(2-hydroxyethyl)-4-methylthiazole + ATP = 4-methyl-5-(2-phosphooxyethyl)-thiazole + ADP + H(+). It participates in cofactor biosynthesis; thiamine diphosphate biosynthesis; 4-methyl-5-(2-phosphoethyl)-thiazole from 5-(2-hydroxyethyl)-4-methylthiazole: step 1/1. Its function is as follows. Catalyzes the phosphorylation of the hydroxyl group of 4-methyl-5-beta-hydroxyethylthiazole (THZ). The protein is Hydroxyethylthiazole kinase of Bacillus cereus (strain ZK / E33L).